Here is a 603-residue protein sequence, read N- to C-terminus: MDWGTELWDQFEVLERHTQWGLDLLDKYVKFVKERAEVEQAYAKQLRSLVKKYLPKRPTKDDPEVKFSQQQSFVQLLQEVNDFAGQRELVAESLGIRVCLELAKYSQEMKQERKMHFQEGRRAQQQLENGFKQLENSKRKFERDCREAEKAAHTAERLDQDINATKADVEKAKQQAHLRNHMAEESKNEYAAQLQRFNRDQAHFYFSQMPQIFDKLQDMDERRATRLGAGYGLLSEAELQVVPIIGKCLEGMKVAAESVDAKNDSQVLIELHKSGFARPGDLEFEDFSQVINRVPSDSSLGTPDGRPELRAASSRSRAKRWPFGKKNKPRPPSLSLLGGHLPSTLSDGPSSPRSGRDPLAILSEISKSVKPRLASFRSFRGGRGTVATEDFSHLPPEQQRKRLQQQLEERNRELQKEEDQREALKKMKDVYEKTPQMGDPASLEPRIAETLGNIERLKLEVQKYEAWLAEAESRVLSNRGDSLSRHARPPDPPTTAPPDSSSSSTNSGSQDNKESSSEEPPSEGQDTPIYTEFDEDFEEPASPIGQCVAIYHFEGSSEGTVSMSEGEDLSLMEEDKGDGWTRVRRKQGAEGYVPTSYLRVTLN.

The interval 1–117 (MDWGTELWDQ…EMKQERKMHF (117 aa)) is required for podosome formation and interaction with AKAP9 and microtubules. A required for translocation to the plasma membrane in response to insulin region spans residues 1-117 (MDWGTELWDQ…EMKQERKMHF (117 aa)). Positions 1–264 (MDWGTELWDQ…AAESVDAKND (264 aa)) constitute an F-BAR domain. A coiled-coil region spans residues 67 to 259 (FSQQQSFVQL…EGMKVAAESV (193 aa)). The tract at residues 293–539 (RVPSDSSLGT…YTEFDEDFEE (247 aa)) is interaction with CDC42. The interaction with PDE6G stretch occupies residues 293–603 (RVPSDSSLGT…PTSYLRVTLN (311 aa)). The interval 295–358 (PSDSSLGTPD…PSSPRSGRDP (64 aa)) is disordered. Residues Ser-296, Ser-298, and Ser-299 each carry the phosphoserine modification. Over residues 316 to 329 (SRAKRWPFGKKNKP) the composition is skewed to basic residues. The segment covering 333-346 (SLSLLGGHLPSTLS) has biased composition (low complexity). A phosphoserine mark is found at Ser-335 and Ser-351. Residues 388 to 481 (TEDFSHLPPE…ESRVLSNRGD (94 aa)) are a coiled coil. In terms of domain architecture, REM-1 spans 393–470 (HLPPEQQRKR…VQKYEAWLAE (78 aa)). Positions 471–603 (AESRVLSNRG…PTSYLRVTLN (133 aa)) are required for interaction with FASLG and localization to lysosomes. Positions 477–541 (SNRGDSLSRH…EFDEDFEEPA (65 aa)) are disordered. A Phosphoserine modification is found at Ser-482. Positions 487–543 (ARPPDPPTTAPPDSSSSSTNSGSQDNKESSSEEPPSEGQDTPIYTEFDEDFEEPASP) are interaction with DNM2 and WASL. Low complexity predominate over residues 497 to 510 (PPDSSSSSTNSGSQ). Residues 532–603 (EFDEDFEEPA…PTSYLRVTLN (72 aa)) are interaction with DNM1 and WASL. The tract at residues 540-603 (PASPIGQCVA…PTSYLRVTLN (64 aa)) is required for podosome formation. The SH3 domain occupies 542-603 (SPIGQCVAIY…PTSYLRVTLN (62 aa)). The interval 546 to 603 (QCVAIYHFEGSSEGTVSMSEGEDLSLMEEDKGDGWTRVRRKQGAEGYVPTSYLRVTLN) is interaction with WAS. The tract at residues 548–603 (VAIYHFEGSSEGTVSMSEGEDLSLMEEDKGDGWTRVRRKQGAEGYVPTSYLRVTLN) is interaction with ARHGAP17, DAAM1, DIAPH1 and DIAPH2.

This sequence belongs to the FNBP1 family. As to quaternary structure, homodimerizes, the dimers can polymerize end-to-end to form filamentous structures. Interacts with AKAP9, ARHGAP17, DAAM1, DIAPH1, DIAPH2, DNM1, FASLG/FASL, GAPVD1, LYN, microtubules, PDE6G, SRC and WAS/WASP. Interacts with the ligand binding domain of the thyroid receptor (TR) in the presence of thyroid hormone. May interact with CTNNB1 and HD/HTT. Interacts specifically with GTP-bound CDC42 and RHOQ. Interacts with DNM2 and WASL. In terms of processing, tyrosine phosphorylated. Also phosphorylated by PKA.

The protein localises to the cytoplasm. It localises to the cytoskeleton. The protein resides in the cell cortex. It is found in the lysosome. Its subcellular location is the golgi apparatus. The protein localises to the cell membrane. It localises to the cell projection. The protein resides in the phagocytic cup. Its function is as follows. Required to coordinate membrane tubulation with reorganization of the actin cytoskeleton during endocytosis. Binds to lipids such as phosphatidylinositol 4,5-bisphosphate and phosphatidylserine and promotes membrane invagination and the formation of tubules. Also promotes CDC42-induced actin polymerization by recruiting WASL/N-WASP which in turn activates the Arp2/3 complex. Actin polymerization may promote the fission of membrane tubules to form endocytic vesicles. Required for the formation of podosomes, actin-rich adhesion structures specific to monocyte-derived cells. May be required for the lysosomal retention of FASLG/FASL. Required for translocation of GLUT4 to the plasma membrane in response to insulin signaling. The sequence is that of Cdc42-interacting protein 4 (Trip10) from Mus musculus (Mouse).